A 521-amino-acid polypeptide reads, in one-letter code: Probable feruloyl esterase B-2 (521 aa).

The N-terminal stretch at 1 to 19 is a signal peptide; it reads MKVSLWLTLLGVNLSLALA. Residues Asn-13, Asn-53, Asn-85, Asn-98, and Asn-138 are each glycosylated (N-linked (GlcNAc...) asparagine). 2 disulfide bridges follow: Cys-28–Cys-75 and Cys-63–Cys-114. 4 disulfides stabilise this stretch: Cys-187–Cys-440, Cys-257–Cys-274, Cys-283–Cys-291, and Cys-506–Cys-520. Ser-188 (acyl-ester intermediate) is an active-site residue. A glycan (N-linked (GlcNAc...) asparagine) is linked at Asn-235. Residues Asp-258, Asp-261, Val-263, Asp-265, and Ile-267 each contribute to the Ca(2+) site. Asp-399 serves as the catalytic Charge relay system. The N-linked (GlcNAc...) asparagine glycan is linked to Asn-419. His-439 functions as the Charge relay system in the catalytic mechanism.

Belongs to the tannase family.

Its subcellular location is the secreted. The catalysed reaction is feruloyl-polysaccharide + H2O = ferulate + polysaccharide.. Its function is as follows. Involved in degradation of plant cell walls. Hydrolyzes the feruloyl-arabinose ester bond in arabinoxylans as well as the feruloyl-galactose and feruloyl-arabinose ester bonds in pectin. This chain is Probable feruloyl esterase B-2 (faeB-2), found in Aspergillus flavus (strain ATCC 200026 / FGSC A1120 / IAM 13836 / NRRL 3357 / JCM 12722 / SRRC 167).